The sequence spans 121 residues: Small ribosomal subunit protein uS13 (121 aa).

Residues 91 to 121 (HRRGLPVRGQNTKNNARTRKGPRKTVANKKK) are disordered. Residues 106-121 (ARTRKGPRKTVANKKK) show a composition bias toward basic residues.

Belongs to the universal ribosomal protein uS13 family. In terms of assembly, part of the 30S ribosomal subunit. Forms a loose heterodimer with protein S19. Forms two bridges to the 50S subunit in the 70S ribosome.

Its function is as follows. Located at the top of the head of the 30S subunit, it contacts several helices of the 16S rRNA. In the 70S ribosome it contacts the 23S rRNA (bridge B1a) and protein L5 of the 50S subunit (bridge B1b), connecting the 2 subunits; these bridges are implicated in subunit movement. Contacts the tRNAs in the A and P-sites. This is Small ribosomal subunit protein uS13 from Lysinibacillus sphaericus (strain C3-41).